Reading from the N-terminus, the 492-residue chain is GlcNAc-binding protein A (492 aa).

The N-terminal stretch at 1–23 (MNKSSTKTLIALSMMAVSSGVSA) is a signal peptide. The region spanning 24–204 (HGYVSETNDG…AFYNVIDVKF (181 aa)) is the Chitin-binding type-4 domain. The region spanning 443 to 484 (AGTKVLAEDSNVYQCKEFPYSGYCVQWTETATNFAPGVGSDW) is the Chitin-binding type-3 domain.

The protein belongs to the GbpA family.

The protein resides in the secreted. Its function is as follows. Probably interacts with GlcNAc residues. May promote attachment to both epithelial cell surfaces and chitin. In Aliivibrio fischeri (strain MJ11) (Vibrio fischeri), this protein is GlcNAc-binding protein A.